Here is a 485-residue protein sequence, read N- to C-terminus: NADH-quinone oxidoreductase subunit N (485 aa).

The next 14 helical transmembrane spans lie at 8–28 (LIAL…MLSI), 35–55 (FLNA…LWFV), 71–91 (GFAM…CTFA), 105–125 (FYLL…ANHL), 127–147 (SLFL…GYAF), 159–179 (YTIL…LVYA), 203–223 (LLAG…LVPF), 235–255 (PAPV…GVVM), 271–291 (VVLA…ALSQ), 297–317 (LLGY…IALQ), 326–346 (VGVY…VVSL), 373–393 (AAVM…LGFI), 408–430 (WWLV…RVAV), and 455–475 (IVVL…QPLI).

It belongs to the complex I subunit 2 family. As to quaternary structure, NDH-1 is composed of 13 different subunits. Subunits NuoA, H, J, K, L, M, N constitute the membrane sector of the complex.

It is found in the cell inner membrane. The catalysed reaction is a quinone + NADH + 5 H(+)(in) = a quinol + NAD(+) + 4 H(+)(out). Its function is as follows. NDH-1 shuttles electrons from NADH, via FMN and iron-sulfur (Fe-S) centers, to quinones in the respiratory chain. The immediate electron acceptor for the enzyme in this species is believed to be ubiquinone. Couples the redox reaction to proton translocation (for every two electrons transferred, four hydrogen ions are translocated across the cytoplasmic membrane), and thus conserves the redox energy in a proton gradient. The polypeptide is NADH-quinone oxidoreductase subunit N (Escherichia coli O81 (strain ED1a)).